Consider the following 428-residue polypeptide: Elongation factor 1-alpha (428 aa).

A tr-type G domain is found at 5 to 215; sequence KPHINIVFIG…ALDQMPEPPK (211 aa). The interval 14 to 21 is G1; it reads GHVDHGKS. Residue 14-21 participates in GTP binding; the sequence is GHVDHGKS. S21 is a Mg(2+) binding site. A G2 region spans residues 68 to 72; it reads GITID. The G3 stretch occupies residues 89-92; it reads DAPG. GTP is bound by residues 89–93 and 144–147; these read DAPGH and NKMD. A G4 region spans residues 144 to 147; that stretch reads NKMD. The tract at residues 181–183 is G5; it reads SAW.

Belongs to the TRAFAC class translation factor GTPase superfamily. Classic translation factor GTPase family. EF-Tu/EF-1A subfamily.

The protein localises to the cytoplasm. The enzyme catalyses GTP + H2O = GDP + phosphate + H(+). GTP hydrolase that promotes the GTP-dependent binding of aminoacyl-tRNA to the A-site of ribosomes during protein biosynthesis. In Thermococcus celer, this protein is Elongation factor 1-alpha.